Consider the following 412-residue polypeptide: MMSLTVLSPPQRFKRILQAMMLAVAVVYMTLLLYQSAYGYPGIQVPHSQVDALASEAVTTHRDQLLQDYVQSSTPTQPGAGAPAASPTTVIIRKDIRSFNFSDIEVSERPTATLLTELARRSRNGELLRDLSQRAVTATPQPPVTELDDIFISVKTTKNYHDTRLALIIKTWFQLARDQTWFFTDTDDHYYQEKTKGHLINTKCSQGHFRKALCCKMSAELDVFLESGKKWFCHFDDDNYVNVPRLVKLLDEYSPSVDWYLGKPSISSPLEIHLDSKNTTTNKKITFWFATGGAGFCLSRALTLKMLPIAGGGKFISIGDKIRFPDDVTMGFIIEHLLKVPLTVVDNFHSHLEPMEFIRQDTFQDQVSFSYAHMKNQWNVIKVDGFDMKTDPKRFYSLHCQLFPYFSFCPPR.

The Cytoplasmic portion of the chain corresponds to 1-15 (MMSLTVLSPPQRFKR). A helical; Signal-anchor for type II membrane protein transmembrane segment spans residues 16-34 (ILQAMMLAVAVVYMTLLLY). Topologically, residues 35–412 (QSAYGYPGIQ…FPYFSFCPPR (378 aa)) are lumenal. Residue Arg164 participates in substrate binding. Intrachain disulfides connect Cys204/Cys215 and Cys233/Cys297. Asp237 is a substrate binding site. Asp238 provides a ligand contact to Mn(2+). The active site involves Asp327. His351 serves as a coordination point for Mn(2+). Cys400 and Cys409 are oxidised to a cystine.

This sequence belongs to the glycosyltransferase 31 family. It depends on Mn(2+) as a cofactor. Expressed in dorsal cells.

It localises to the golgi apparatus membrane. The catalysed reaction is 3-O-(alpha-L-fucosyl)-L-threonyl-[EGF-like domain protein] + UDP-N-acetyl-alpha-D-glucosamine = 3-O-(N-acetyl-beta-D-glucosaminyl-(1-&gt;3)-alpha-L-fucosyl)-L-threonyl-[EGF-like domain protein] + UDP + H(+). The enzyme catalyses 3-O-(alpha-L-fucosyl)-L-seryl-[EGF-like domain protein] + UDP-N-acetyl-alpha-D-glucosamine = 3-O-(N-acetyl-beta-D-glucosaminyl-(1-&gt;3)-alpha-L-fucosyl)-L-seryl-[EGF-like domain protein] + UDP + H(+). Glycosyltransferase involved in the elongation of O-linked ligands to activate Notch signaling. Possesses fucose-specific beta-1,3-N-acetylglucosaminyltransferase activity; extends the O-linked fucose on the Notch EGF repeats. Boundary-specific cell-signaling molecule that is responsible for dorsal-ventral cell interactions during wing development. The chain is Fringe glycosyltransferase (fng) from Drosophila melanogaster (Fruit fly).